The chain runs to 450 residues: UDP-N-acetylmuramoylalanine--D-glutamate ligase (450 aa).

Position 115–121 (115–121 (GTNGKST)) interacts with ATP.

This sequence belongs to the MurCDEF family.

Its subcellular location is the cytoplasm. It catalyses the reaction UDP-N-acetyl-alpha-D-muramoyl-L-alanine + D-glutamate + ATP = UDP-N-acetyl-alpha-D-muramoyl-L-alanyl-D-glutamate + ADP + phosphate + H(+). Its pathway is cell wall biogenesis; peptidoglycan biosynthesis. Functionally, cell wall formation. Catalyzes the addition of glutamate to the nucleotide precursor UDP-N-acetylmuramoyl-L-alanine (UMA). In Syntrophotalea carbinolica (strain DSM 2380 / NBRC 103641 / GraBd1) (Pelobacter carbinolicus), this protein is UDP-N-acetylmuramoylalanine--D-glutamate ligase.